The primary structure comprises 602 residues: UvrABC system protein C (602 aa).

The 78-residue stretch at 15–92 (DLPGSYQMKD…IQKYQPYYNI (78 aa)) folds into the GIY-YIG domain. Residues 197–232 (GKAKASLTAKMERAAKNLQFERAAEIRDQLHYIEQT) enclose the UVR domain.

It belongs to the UvrC family. In terms of assembly, interacts with UvrB in an incision complex.

The protein localises to the cytoplasm. The UvrABC repair system catalyzes the recognition and processing of DNA lesions. UvrC both incises the 5' and 3' sides of the lesion. The N-terminal half is responsible for the 3' incision and the C-terminal half is responsible for the 5' incision. This Lacticaseibacillus casei (strain BL23) (Lactobacillus casei) protein is UvrABC system protein C.